A 77-amino-acid polypeptide reads, in one-letter code: Acyl carrier protein (77 aa).

In terms of domain architecture, Carrier spans 2 to 77; sequence SDIEQRVKNV…LAIDYVKSHQ (76 aa). Serine 37 carries the O-(pantetheine 4'-phosphoryl)serine modification.

The protein belongs to the acyl carrier protein (ACP) family. In terms of processing, 4'-phosphopantetheine is transferred from CoA to a specific serine of apo-ACP by AcpS. This modification is essential for activity because fatty acids are bound in thioester linkage to the sulfhydryl of the prosthetic group.

The protein resides in the cytoplasm. It functions in the pathway lipid metabolism; fatty acid biosynthesis. In terms of biological role, carrier of the growing fatty acid chain in fatty acid biosynthesis. The sequence is that of Acyl carrier protein from Leucothrix mucor.